We begin with the raw amino-acid sequence, 1011 residues long: Cell division cycle-associated protein 2 (1011 aa).

Polar residues predominate over residues 1-22 (MDTCSQESEPLQTKESPINNAG). A disordered region spans residues 1 to 26 (MDTCSQESEPLQTKESPINNAGKTPL). Phosphoserine is present on residues serine 125, serine 130, serine 209, serine 293, and serine 310. Position 313 is a phosphothreonine (threonine 313). Residues 380–440 (KRKRVTFGED…PEWLPQPNFD (61 aa)) enclose the PP1-binding domain. Serine 391 and serine 398 each carry phosphoserine. Disordered stretches follow at residues 395-438 (LDES…PQPN) and 522-544 (PCKE…KVLP). Threonine 403 carries the post-translational modification Phosphothreonine. The segment covering 418 to 431 (SSLSPPLLEQSPVP) has biased composition (low complexity). Serine 428 carries the post-translational modification Phosphoserine. Residues 522–543 (PCKEKKTNRRKSQESKHADKVL) are compositionally biased toward basic and acidic residues. Phosphoserine occurs at positions 583, 702, and 747. A Glycyl lysine isopeptide (Lys-Gly) (interchain with G-Cter in SUMO2) cross-link involves residue lysine 753. Over residues 790 to 803 (DQRKVSKSQGEDLG) the composition is skewed to basic and acidic residues. Disordered stretches follow at residues 790 to 835 (DQRK…GLHL) and 896 to 1011 (GLVW…LSEN). Polar residues predominate over residues 931–945 (SSRQDPCTLPSTSSE). Serine 967 carries the post-translational modification Phosphoserine. The span at 968-983 (FCTSTLANPKSTTQSR) shows a compositional bias: polar residues. Residues 993-1011 (QKRENTLQETSRESDLSEN) are compositionally biased toward basic and acidic residues.

As to quaternary structure, interacts with PPP1CC. Phosphorylated by CDK1. May regulate its subcellular location.

The protein resides in the nucleus. Regulator of chromosome structure during mitosis required for condensin-depleted chromosomes to retain their compact architecture through anaphase. Acts by mediating the recruitment of phopsphatase PP1-gamma subunit (PPP1CC) to chromatin at anaphase and into the following interphase. At anaphase onset, its association with chromatin targets a pool of PPP1CC to dephosphorylate substrates. The protein is Cell division cycle-associated protein 2 (CDCA2) of Bos taurus (Bovine).